The sequence spans 272 residues: Putative pyruvate, phosphate dikinase regulatory protein (272 aa).

147 to 154 (GLSRTSKT) is a binding site for ADP.

It belongs to the pyruvate, phosphate/water dikinase regulatory protein family. PDRP subfamily.

It catalyses the reaction N(tele)-phospho-L-histidyl/L-threonyl-[pyruvate, phosphate dikinase] + ADP = N(tele)-phospho-L-histidyl/O-phospho-L-threonyl-[pyruvate, phosphate dikinase] + AMP + H(+). The enzyme catalyses N(tele)-phospho-L-histidyl/O-phospho-L-threonyl-[pyruvate, phosphate dikinase] + phosphate + H(+) = N(tele)-phospho-L-histidyl/L-threonyl-[pyruvate, phosphate dikinase] + diphosphate. Bifunctional serine/threonine kinase and phosphorylase involved in the regulation of the pyruvate, phosphate dikinase (PPDK) by catalyzing its phosphorylation/dephosphorylation. This chain is Putative pyruvate, phosphate dikinase regulatory protein, found in Clostridium botulinum (strain Alaska E43 / Type E3).